The chain runs to 353 residues: Ubiquinol oxidase 1, mitochondrial (353 aa).

A mitochondrion-targeting transit peptide spans 1–69; sequence MMTRGATRMT…RHFPVMGSRS (69 aa). The segment at 77 to 99 is disordered; the sequence is DKQHDKKAENGSAAATGGGDGGD. The helical transmembrane segment at 178–198 threads the bilayer; it reads AMMLETVAAVPGMVGGMLLHC. The Fe cation site is built by Glu182, Glu221, and His224. The helical transmembrane segment at 240–260 threads the bilayer; the sequence is ALVFAVQGVFFNAYFVTYLLS. Residues Glu272, Glu323, and His326 each coordinate Fe cation.

The protein belongs to the alternative oxidase family. Homodimer; disulfide-linked. Requires Fe cation as cofactor.

The protein resides in the mitochondrion inner membrane. The enzyme catalyses 2 a ubiquinol + O2 = 2 a ubiquinone + 2 H2O. Its activity is regulated as follows. Stimulated by reduction of the disulfide bond and the presence of pyruvate. In terms of biological role, catalyzes the cyanide-resistant oxidation of ubiquinol and the reduction of molecular oxygen to water, but does not translocate protons and consequently is not linked to oxidative phosphorylation. May increase respiration when the cytochrome respiratory pathway is restricted, or in response to low temperatures. In Nicotiana tabacum (Common tobacco), this protein is Ubiquinol oxidase 1, mitochondrial (AOX1).